Here is a 309-residue protein sequence, read N- to C-terminus: High-affinity zinc uptake system protein AztC (309 aa).

A signal peptide spans 1–24 (MKDWLFRIATCSIMTFSSLAAAQA). Histidine 61 contacts Zn(2+). The D-loop stretch occupies residues 117–132 (GGGHYHYIDGKAVFHA). Residue histidine 138 participates in Zn(2+) binding. A disulfide bond links cysteine 158 and cysteine 165. Histidine 204 lines the Zn(2+) pocket. The interval 222 to 229 (QGVSTESE) is Z-loop. A Zn(2+)-binding site is contributed by aspartate 279.

Belongs to the bacterial solute-binding protein 9 family. Monomer.

The protein resides in the periplasm. Its function is as follows. Part of the ATP-binding cassette (ABC) transport system AztABCD involved in zinc import. Binds zinc with high affinity and specificity and delivers it to the membrane permease for translocation into the cytoplasm. This is High-affinity zinc uptake system protein AztC from Paracoccus denitrificans (strain Pd 1222).